Here is a 211-residue protein sequence, read N- to C-terminus: Large ribosomal subunit protein uL3 (211 aa).

Gln150 carries the N5-methylglutamine modification.

The protein belongs to the universal ribosomal protein uL3 family. In terms of assembly, part of the 50S ribosomal subunit. Forms a cluster with proteins L14 and L19. In terms of processing, methylated by PrmB.

Functionally, one of the primary rRNA binding proteins, it binds directly near the 3'-end of the 23S rRNA, where it nucleates assembly of the 50S subunit. The polypeptide is Large ribosomal subunit protein uL3 (Pseudomonas fluorescens (strain Pf0-1)).